Reading from the N-terminus, the 120-residue chain is Large ribosomal subunit protein bL17 (120 aa).

This sequence belongs to the bacterial ribosomal protein bL17 family. As to quaternary structure, part of the 50S ribosomal subunit. Contacts protein L32.

The chain is Large ribosomal subunit protein bL17 from Bacillus subtilis (strain 168).